The sequence spans 312 residues: Cytochrome f (312 aa).

The N-terminal stretch at 1-28 (MQISKFFKFVFISVSLCGSLLFPQMANA) is a signal peptide. The heme site is built by Tyr29, Cys49, Cys52, and His53. The helical transmembrane segment at 278–298 (VKGMIAFFFTVTVAQILLVLK) threads the bilayer.

This sequence belongs to the cytochrome f family. In terms of assembly, the 4 large subunits of the cytochrome b6-f complex are cytochrome b6, subunit IV (17 kDa polypeptide, petD), cytochrome f and the Rieske protein, while the 4 small subunits are PetG, PetL, PetM and PetN. The complex functions as a dimer. Requires heme as cofactor.

It localises to the plastid. The protein resides in the chloroplast thylakoid membrane. Component of the cytochrome b6-f complex, which mediates electron transfer between photosystem II (PSII) and photosystem I (PSI), cyclic electron flow around PSI, and state transitions. This chain is Cytochrome f, found in Emiliania huxleyi (Coccolithophore).